Here is an 833-residue protein sequence, read N- to C-terminus: Major vault protein (833 aa).

MVP repeat units lie at residues 10 to 52 (RYYY…VSVP), 54 to 115 (RHYC…RKLQ), 119 to 170 (PNTG…TVIY), 171 to 223 (PNTA…TMLS), 224 to 278 (ELKA…VSLN), 280 to 328 (KEYV…LVVG), 329 to 380 (KEEA…MALD), and 381 to 433 (RNEG…SIKT).

In terms of assembly, the vault ribonucleoprotein particle is a huge (400 A x 670 A) cage structure of 12.9 MDa. It consists of a dimer of half-vaults, with each half-vault comprising 39 identical major vault protein (MVP) chains, PARP4 and one or more vault RNAs (vRNAs).

Its subcellular location is the cytoplasm. It is found in the nucleus. Its function is as follows. Required for normal vault structure. Vaults are multi-subunit structures that may act as scaffolds for proteins involved in signal transduction. Vaults may also play a role in nucleo-cytoplasmic transport. This Leishmania braziliensis protein is Major vault protein.